The following is a 175-amino-acid chain: Large ribosomal subunit protein uL10 (175 aa).

Belongs to the universal ribosomal protein uL10 family. As to quaternary structure, part of the ribosomal stalk of the 50S ribosomal subunit. The N-terminus interacts with L11 and the large rRNA to form the base of the stalk. The C-terminus forms an elongated spine to which L12 dimers bind in a sequential fashion forming a multimeric L10(L12)X complex.

In terms of biological role, forms part of the ribosomal stalk, playing a central role in the interaction of the ribosome with GTP-bound translation factors. The chain is Large ribosomal subunit protein uL10 from Alkalilimnicola ehrlichii (strain ATCC BAA-1101 / DSM 17681 / MLHE-1).